The sequence spans 194 residues: MTAIQLIVGLGNPGAEYEQTRHNAGAFFVERIAAAQRVDLVPERKFFGLTGRFTHQGQDVRLLIPTTYMNRSGQAVAALAGFYRIPVESILVAHDELDLPPGVAKLKVGGGHGGHNGLRDIIAQLGNQNTFHRLRLGIGHPGDASKVSGFVLGRAPRAEQEKLDASIDFALGVLPDIFAGEWNRAMKNLHSQKA.

Y17 is a tRNA binding site. H22 functions as the Proton acceptor in the catalytic mechanism. Residues Y68, N70, and N116 each coordinate tRNA.

It belongs to the PTH family. As to quaternary structure, monomer.

The protein resides in the cytoplasm. It catalyses the reaction an N-acyl-L-alpha-aminoacyl-tRNA + H2O = an N-acyl-L-amino acid + a tRNA + H(+). Its function is as follows. Hydrolyzes ribosome-free peptidyl-tRNAs (with 1 or more amino acids incorporated), which drop off the ribosome during protein synthesis, or as a result of ribosome stalling. Catalyzes the release of premature peptidyl moieties from peptidyl-tRNA molecules trapped in stalled 50S ribosomal subunits, and thus maintains levels of free tRNAs and 50S ribosomes. The chain is Peptidyl-tRNA hydrolase from Pseudomonas syringae pv. syringae (strain B728a).